A 28-amino-acid polypeptide reads, in one-letter code: GTACGESCYVLPCFTVGCTCTSSQCFKN.

Positions 1 to 28 (GTACGESCYVLPCFTVGCTCTSSQCFKN) form a cross-link, cyclopeptide (Gly-Asn). 3 cysteine pairs are disulfide-bonded: C4-C18, C8-C20, and C13-C25.

In terms of processing, this is a cyclic peptide.

Probably participates in a plant defense mechanism. Has anti-HIV activity. This is Cycloviolin-B from Leonia cymosa (Sacha uba).